The sequence spans 101 residues: Urease subunit beta (101 aa).

The protein belongs to the urease beta subunit family. Heterotrimer of UreA (gamma), UreB (beta) and UreC (alpha) subunits. Three heterotrimers associate to form the active enzyme.

It is found in the cytoplasm. The enzyme catalyses urea + 2 H2O + H(+) = hydrogencarbonate + 2 NH4(+). The protein operates within nitrogen metabolism; urea degradation; CO(2) and NH(3) from urea (urease route): step 1/1. This is Urease subunit beta from Haemophilus influenzae (strain 86-028NP).